The following is a 587-amino-acid chain: Arginine--tRNA ligase (587 aa).

Residues 126 to 136 (ANPTGPLHVGH) carry the 'HIGH' region motif.

Belongs to the class-I aminoacyl-tRNA synthetase family. Monomer.

The protein resides in the cytoplasm. The catalysed reaction is tRNA(Arg) + L-arginine + ATP = L-arginyl-tRNA(Arg) + AMP + diphosphate. This chain is Arginine--tRNA ligase, found in Aromatoleum aromaticum (strain DSM 19018 / LMG 30748 / EbN1) (Azoarcus sp. (strain EbN1)).